A 1158-amino-acid chain; its full sequence is Adipocyte enhancer-binding protein 1 (1158 aa).

The N-terminal stretch at 1–25 (MAAVRGAPLLSCLLALLALCPGGRP) is a signal peptide. Residues 41-387 (FLSELEPEPR…TPTEKVKCPP (347 aa)) form a disordered region. Over residues 45-55 (LEPEPREDDVE) the composition is skewed to acidic residues. Basic and acidic residues predominate over residues 100-110 (DKGPKVPKESL). Residues 116 to 166 (PPKKGKEKPPKATKKPKEKPPKATKKPKEKPPKATKKPKEKPPKATKKPPS) show a composition bias toward basic residues. The segment covering 182 to 192 (PLPPPPSPGPE) has biased composition (pro residues). The span at 193–202 (ELPQEGGAPL) shows a compositional bias: low complexity. Over residues 211–223 (EETHVEAREHQPE) the composition is skewed to basic and acidic residues. Positions 252 to 266 (RQKQPRPPPSRRRRP) are enriched in basic residues. Basic and acidic residues predominate over residues 267 to 289 (ERVWPEPPEEKAPAPAPEERIEP). Over residues 290–300 (PVKPLLPPLPP) the composition is skewed to pro residues. Residues 326–371 (PDAERQTDEEKEELKKPKKEDSSPKEETDKWAVEKGKDHKEPRKGE) are compositionally biased toward basic and acidic residues. The 158-residue stretch at 383–540 (VKCPPIGMES…LCMRLEVLGC (158 aa)) folds into the F5/8 type C domain. The required for DNA-binding and interaction with NFKBIA stretch occupies residues 390–555 (MESHRIEDNQ…YSYYAQNEVV (166 aa)). The interval 421-624 (TGATEDDYYD…EPEFRYTAGI (204 aa)) is interaction with MAPK1 and MAPK3. The N-linked (GlcNAc...) asparagine glycan is linked to N528. The tract at residues 555–985 (VATDDLDFRH…TQCNFILARS (431 aa)) is interaction with PTEN. The region spanning 563–904 (RHHSYKDMRQ…EALLTFMEQV (342 aa)) is the Peptidase M14 domain. N922 carries N-linked (GlcNAc...) asparagine glycosylation. The interval 941-1158 (DYWRILNPGE…ETYTVNFGDF (218 aa)) is required for transcriptional repression. Residues 1006–1158 (DPSRPMTPQQ…ETYTVNFGDF (153 aa)) form an interaction with MAPK1 and MAPK3 region. Positions 1108–1137 (EFETQLEPEFETQLEPEFEEEEEEEKEEEI) are enriched in acidic residues. Residues 1108–1141 (EFETQLEPEFETQLEPEFEEEEEEEKEEEIATGQ) form a disordered region.

The protein belongs to the peptidase M14 family. Isoform 1: Interacts with different types of collagen, including collagens I, III, and V. Isoform 2: Interacts with GNG5, NFKBIA, MAPK1, MAPK3 and PTEN. Interaction with MAPK1 may stimulate DNA-binding. May interact with calmodulin. Binds to DNA in vitro. Post-translationally, phosphorylated by MAPK1 in vitro. Expressed in osteoblast and visceral fat.

It is found in the secreted. Its subcellular location is the cytoplasm. The protein resides in the nucleus. As a positive regulator of collagen fibrillogenesis, it is probably involved in the organization and remodeling of the extracellular matrix. Its function is as follows. May positively regulate MAP-kinase activity in adipocytes, leading to enhanced adipocyte proliferation and reduced adipocyte differentiation. May also positively regulate NF-kappa-B activity in macrophages by promoting the phosphorylation and subsequent degradation of I-kappa-B-alpha (NFKBIA), leading to enhanced macrophage inflammatory responsiveness. Can act as a transcriptional repressor. The polypeptide is Adipocyte enhancer-binding protein 1 (AEBP1) (Homo sapiens (Human)).